The following is a 238-amino-acid chain: Pyridoxine 5'-phosphate synthase (238 aa).

Residue Asn6 coordinates 3-amino-2-oxopropyl phosphate. A 1-deoxy-D-xylulose 5-phosphate-binding site is contributed by 8–9 (DH). Residue Arg17 coordinates 3-amino-2-oxopropyl phosphate. Residue His42 is the Proton acceptor of the active site. 1-deoxy-D-xylulose 5-phosphate is bound by residues Arg44 and His49. Glu69 (proton acceptor) is an active-site residue. Thr99 is a binding site for 1-deoxy-D-xylulose 5-phosphate. The active-site Proton donor is the His186. 3-amino-2-oxopropyl phosphate-binding positions include Gly187 and 208 to 209 (GH).

This sequence belongs to the PNP synthase family. As to quaternary structure, homooctamer; tetramer of dimers.

The protein localises to the cytoplasm. The enzyme catalyses 3-amino-2-oxopropyl phosphate + 1-deoxy-D-xylulose 5-phosphate = pyridoxine 5'-phosphate + phosphate + 2 H2O + H(+). Its pathway is cofactor biosynthesis; pyridoxine 5'-phosphate biosynthesis; pyridoxine 5'-phosphate from D-erythrose 4-phosphate: step 5/5. Its function is as follows. Catalyzes the complicated ring closure reaction between the two acyclic compounds 1-deoxy-D-xylulose-5-phosphate (DXP) and 3-amino-2-oxopropyl phosphate (1-amino-acetone-3-phosphate or AAP) to form pyridoxine 5'-phosphate (PNP) and inorganic phosphate. This Anaplasma marginale (strain St. Maries) protein is Pyridoxine 5'-phosphate synthase.